Here is a 98-residue protein sequence, read N- to C-terminus: NADH-ubiquinone oxidoreductase chain 4L (98 aa).

The next 3 helical transmembrane spans lie at 1–21 (MSLT…GLLM), 29–49 (SLLC…VIIL), and 61–81 (IILL…LVMV).

It belongs to the complex I subunit 4L family. As to quaternary structure, core subunit of respiratory chain NADH dehydrogenase (Complex I) which is composed of 45 different subunits.

The protein resides in the mitochondrion inner membrane. The enzyme catalyses a ubiquinone + NADH + 5 H(+)(in) = a ubiquinol + NAD(+) + 4 H(+)(out). Core subunit of the mitochondrial membrane respiratory chain NADH dehydrogenase (Complex I) which catalyzes electron transfer from NADH through the respiratory chain, using ubiquinone as an electron acceptor. Part of the enzyme membrane arm which is embedded in the lipid bilayer and involved in proton translocation. This Uroderma bilobatum (Tent-making bat) protein is NADH-ubiquinone oxidoreductase chain 4L (MT-ND4L).